Here is a 216-residue protein sequence, read N- to C-terminus: Uracil phosphoribosyltransferase (216 aa).

GTP contacts are provided by residues arginine 32, arginine 41, 75-78 (LGKI), and lysine 77. Arginine 85 lines the 5-phospho-alpha-D-ribose 1-diphosphate pocket. Arginine 102 is a binding site for GTP. Arginine 110 serves as a coordination point for 5-phospho-alpha-D-ribose 1-diphosphate. Arginine 131 provides a ligand contact to GTP. 5-phospho-alpha-D-ribose 1-diphosphate contacts are provided by residues aspartate 137 and 137-145 (DPMLATGGS). Residue tyrosine 201 coordinates D-ribose 5-phosphate. Residues leucine 202 and 207–209 (GDF) contribute to the uracil site. Aspartate 208 provides a ligand contact to 5-phospho-alpha-D-ribose 1-diphosphate.

The protein belongs to the UPRTase family. Mg(2+) serves as cofactor.

The catalysed reaction is UMP + diphosphate = 5-phospho-alpha-D-ribose 1-diphosphate + uracil. Its pathway is pyrimidine metabolism; UMP biosynthesis via salvage pathway; UMP from uracil: step 1/1. Its activity is regulated as follows. Allosterically activated by GTP. Catalyzes the conversion of uracil and 5-phospho-alpha-D-ribose 1-diphosphate (PRPP) to UMP and diphosphate. The protein is Uracil phosphoribosyltransferase (FUR1) of Lachancea kluyveri (Yeast).